The chain runs to 366 residues: tRNA/tmRNA (uracil-C(5))-methyltransferase (366 aa).

S-adenosyl-L-methionine contacts are provided by Q188, Y216, N221, E237, and D297. Residue C322 is the Nucleophile of the active site. The active-site Proton acceptor is the E356.

Belongs to the class I-like SAM-binding methyltransferase superfamily. RNA M5U methyltransferase family. TrmA subfamily.

It catalyses the reaction uridine(54) in tRNA + S-adenosyl-L-methionine = 5-methyluridine(54) in tRNA + S-adenosyl-L-homocysteine + H(+). It carries out the reaction uridine(341) in tmRNA + S-adenosyl-L-methionine = 5-methyluridine(341) in tmRNA + S-adenosyl-L-homocysteine + H(+). Dual-specificity methyltransferase that catalyzes the formation of 5-methyluridine at position 54 (m5U54) in all tRNAs, and that of position 341 (m5U341) in tmRNA (transfer-mRNA). In Histophilus somni (strain 129Pt) (Haemophilus somnus), this protein is tRNA/tmRNA (uracil-C(5))-methyltransferase.